A 476-amino-acid polypeptide reads, in one-letter code: 3-isopropylmalate dehydratase large subunit (476 aa).

C357, C417, and C420 together coordinate [4Fe-4S] cluster.

The protein belongs to the aconitase/IPM isomerase family. LeuC type 1 subfamily. As to quaternary structure, heterodimer of LeuC and LeuD. Requires [4Fe-4S] cluster as cofactor.

The catalysed reaction is (2R,3S)-3-isopropylmalate = (2S)-2-isopropylmalate. The protein operates within amino-acid biosynthesis; L-leucine biosynthesis; L-leucine from 3-methyl-2-oxobutanoate: step 2/4. In terms of biological role, catalyzes the isomerization between 2-isopropylmalate and 3-isopropylmalate, via the formation of 2-isopropylmaleate. The sequence is that of 3-isopropylmalate dehydratase large subunit from Mycobacterium leprae (strain TN).